The following is a 277-amino-acid chain: MPLSSKVSQAPWSLTGKTAVVTGGSRGIGRAIAIHLARKGVRKLAITYVRDLASAESALEEIRKEGIETGIAIQADILNASVGRDLIAQALVGLETSTIDILVNNAALLDPINTPSVEDVTLENFQELMQANCFAPVSIINACMPHLPPSGGRVINISSVASKTPNPGTIVTYGASKAALDSYTRSMAGLFAKDKTATFNTVCVGPTVTDSFRAVSQLYPGEFIKEVAKSFTAADRVGVPEDIAYIVGFLASEEGRWMNGACVSANGGLREALPALS.

Positions 28, 76, and 105 each coordinate NADP(+). Catalysis depends on proton donor residues Ser158 and Ser159. NADP(+) is bound by residues Tyr173, Lys177, and Thr209. The active-site Proton acceptor is Tyr173. Catalysis depends on Lys177, which acts as the Lowers pKa of active site Tyr.

It belongs to the short-chain dehydrogenases/reductases (SDR) family.

It carries out the reaction yaequinolone D + NADPH + H(+) = penigequinolone A + NADP(+) + H2O. It catalyses the reaction yaequinolone D + NADPH + H(+) = penigequinolone B + NADP(+) + H2O. It functions in the pathway secondary metabolite biosynthesis. The protein operates within alkaloid biosynthesis. Its pathway is mycotoxin biosynthesis. In terms of biological role, short chain dehydrogenase; part of the gene cluster that mediates the biosynthesis of penigequinolones, potent insecticidal alkaloids that contain a highly modified 10-carbon prenyl group. The first stage is catalyzed by the nonribosomal peptide synthetase penN that condenses anthranilic acid and O-methyl-L-tyrosine to produce 4'-methoxycyclopeptin. 4'-methoxycyclopeptin is then converted to 4'-methoxydehydrocyclopeptin by the ketoglutarate-dependent dioxygenase penM through dehydrogenation to form a double bond between C-alpha and C-beta of the O-methyltyrosine side chain. PenM also converts its first product methoxydehydrocyclopeptin to 4'-methoxycyclopenin. The following conversion of 4'methoxycyclopenin into 4'-methoxyviridicatin is catalyzed by the cyclopenase penL. 4'-methoxyviridicatin is the precursor of quinolone natural products, and is further converted to quinolinone B. The prenyltransferase penI then catalyzes the canonical Friedel-Crafts alkylation of quinolinone B with dimethylallyl cation to yield dimethylallyl quinolone, which is subjected to FAD-dependent dehydrogenation by the FAD-linked oxidoreductase penH to yield conjugated aryl diene. The delta(3') double bond then serves as the site of the second alkylation with DMAPP catalyzed by the prenyltransferase penG to yield a carbenium ion intermediate, which can be attacked by H(2)O to yield a styrenyl quinolone containing a C3'-hydroxyprenyl chain, or undergo cyclization to yield yaequinolones J1 and J2. The conversion of the styrenyl quinolone into the tetrahydrofuran-containing yaequinolone C is performed by the FAD-dependent monooxygenase penE and involves epoxidation of the terminal C7'-C8' olefin, followed by epoxide ring opening initiated by the C3' hydroxyl group. The predicted cysteine hydrolase penJ acts as an epoxide hydrolase that enhances the rate of the 5-exo-tet cyclization step, increasing the yield of yaequinolone C. PenF catalyzes the cationic rearrangement of the epoxide formed by penE (before ring opening to produce yaequinolone C) into yaequinolone D. Finally, the short-chain dehydrogenase/reductase (SDR)-like reductase penD, catalyzes both the dehydration of yaequinolone D and the reduction of the resulting oxonium to yield penigequinolone. The chain is Short chain dehydrogenase penD from Penicillium thymicola.